The primary structure comprises 281 residues: Large ribosomal subunit protein uL2 (281 aa).

A disordered region spans residues 213–281 (RNRHKGIRPT…LIIRRRKESK (69 aa)).

Belongs to the universal ribosomal protein uL2 family. Part of the 50S ribosomal subunit. Forms a bridge to the 30S subunit in the 70S ribosome.

One of the primary rRNA binding proteins. Required for association of the 30S and 50S subunits to form the 70S ribosome, for tRNA binding and peptide bond formation. It has been suggested to have peptidyltransferase activity; this is somewhat controversial. Makes several contacts with the 16S rRNA in the 70S ribosome. The sequence is that of Large ribosomal subunit protein uL2 from Mycoplasmopsis pulmonis (strain UAB CTIP) (Mycoplasma pulmonis).